We begin with the raw amino-acid sequence, 563 residues long: F-box/kelch-repeat protein At5g42360 (563 aa).

Residues 129 to 175 (YRKHVYLPDDILEMCLMRLPLTSLLNAHLVCKKWQSMANTQRFLQMR) enclose the F-box domain. Kelch repeat units lie at residues 184–231 (WLFL…SIHE), 232–282 (EIYI…ATEV), and 355–402 (VLIA…IICN).

The sequence is that of F-box/kelch-repeat protein At5g42360 from Arabidopsis thaliana (Mouse-ear cress).